A 112-amino-acid chain; its full sequence is Citrate synthase (112 aa).

Residues histidine 39 and aspartate 97 contribute to the active site.

It belongs to the citrate synthase family.

The catalysed reaction is oxaloacetate + acetyl-CoA + H2O = citrate + CoA + H(+). It functions in the pathway carbohydrate metabolism; tricarboxylic acid cycle; isocitrate from oxaloacetate: step 1/2. The chain is Citrate synthase (gltA) from Bartonella vinsonii subsp. berkhoffii.